Here is a 683-residue protein sequence, read N- to C-terminus: DNA ligase (683 aa).

NAD(+)-binding positions include 42 to 46 (DAEYD), 91 to 92 (SL), and Glu122. Catalysis depends on Lys124, which acts as the N6-AMP-lysine intermediate. 4 residues coordinate NAD(+): Arg145, Glu182, Lys299, and Lys323. Residues Cys417, Cys420, Cys435, and Cys441 each coordinate Zn(2+). The 82-residue stretch at 602–683 (APQGVLAGKT…MRKLLEGQTT (82 aa)) folds into the BRCT domain.

This sequence belongs to the NAD-dependent DNA ligase family. LigA subfamily. Requires Mg(2+) as cofactor. It depends on Mn(2+) as a cofactor.

It carries out the reaction NAD(+) + (deoxyribonucleotide)n-3'-hydroxyl + 5'-phospho-(deoxyribonucleotide)m = (deoxyribonucleotide)n+m + AMP + beta-nicotinamide D-nucleotide.. Its function is as follows. DNA ligase that catalyzes the formation of phosphodiester linkages between 5'-phosphoryl and 3'-hydroxyl groups in double-stranded DNA using NAD as a coenzyme and as the energy source for the reaction. It is essential for DNA replication and repair of damaged DNA. The chain is DNA ligase from Paraburkholderia phymatum (strain DSM 17167 / CIP 108236 / LMG 21445 / STM815) (Burkholderia phymatum).